A 63-amino-acid chain; its full sequence is Small ribosomal subunit protein eS17 (63 aa).

The protein belongs to the eukaryotic ribosomal protein eS17 family.

The protein is Small ribosomal subunit protein eS17 of Methanococcus maripaludis (strain C6 / ATCC BAA-1332).